A 152-amino-acid polypeptide reads, in one-letter code: Transcriptional repressor NrdR (152 aa).

The segment at C3–C34 is a zinc-finger region. Residues I48 to E138 enclose the ATP-cone domain.

Belongs to the NrdR family. Zn(2+) serves as cofactor.

In terms of biological role, negatively regulates transcription of bacterial ribonucleotide reductase nrd genes and operons by binding to NrdR-boxes. This chain is Transcriptional repressor NrdR, found in Chlamydia muridarum (strain MoPn / Nigg).